The sequence spans 460 residues: MKKIKTYENKNILILGLGKSGFSVAKLLLKLGAKLTLNDKKDLSNDDRAAELDKLGVRIISGYHPVEIFDKEKFDYLVKNPGIPYENPMVEKALKLNIPVITEPEIALNVSEAPYVCVTGSNGKTTTVMLTQRIMDHHLSKNGGHAYAVGNIGVPISEVVEKATDKDLLVVEMSSFQLLGVTDIKPKVAAIVDIYNNVHLDYHKTFDNYVEAKLRITQSQDQNDYFIANFDQKNILDRELKKTKAKVQTFSETDKTADYFIGDEYLESKDDHQIMKISDIKIPGIHNQQNCLVAIAISKLMGADDSDIQYALSTFTGATHRLQYVMTYNDRKIYNDSKSTNIEAATVAIPSFKEPEVLIAGGLDRGFMFDSLVPLFKKYVKSIVLYGETKYLLADAARKAGIKDIVIVNTLQEAVPRAYELSEAGDVILFSPACASWDQFNTFEERGDFFVKFIKELKTK.

An ATP-binding site is contributed by 120–126 (GSNGKTT).

The protein belongs to the MurCDEF family.

It localises to the cytoplasm. It carries out the reaction UDP-N-acetyl-alpha-D-muramoyl-L-alanine + D-glutamate + ATP = UDP-N-acetyl-alpha-D-muramoyl-L-alanyl-D-glutamate + ADP + phosphate + H(+). The protein operates within cell wall biogenesis; peptidoglycan biosynthesis. Cell wall formation. Catalyzes the addition of glutamate to the nucleotide precursor UDP-N-acetylmuramoyl-L-alanine (UMA). The polypeptide is UDP-N-acetylmuramoylalanine--D-glutamate ligase (Lactobacillus gasseri (strain ATCC 33323 / DSM 20243 / BCRC 14619 / CIP 102991 / JCM 1131 / KCTC 3163 / NCIMB 11718 / NCTC 13722 / AM63)).